The chain runs to 625 residues: tRNA uridine 5-carboxymethylaminomethyl modification enzyme MnmG (625 aa).

Residues 11-16 (GAGHAG), Val123, and Ser178 contribute to the FAD site. Residue 271–285 (GPRYCPSIETKIVTF) coordinates NAD(+). Gln368 contributes to the FAD binding site.

This sequence belongs to the MnmG family. Homodimer. Heterotetramer of two MnmE and two MnmG subunits. Requires FAD as cofactor.

Its subcellular location is the cytoplasm. In terms of biological role, NAD-binding protein involved in the addition of a carboxymethylaminomethyl (cmnm) group at the wobble position (U34) of certain tRNAs, forming tRNA-cmnm(5)s(2)U34. This Bacteroides fragilis (strain YCH46) protein is tRNA uridine 5-carboxymethylaminomethyl modification enzyme MnmG.